A 454-amino-acid chain; its full sequence is tRNA modification GTPase MnmE (454 aa).

(6S)-5-formyl-5,6,7,8-tetrahydrofolate contacts are provided by Arg23, Glu80, and Lys120. The TrmE-type G domain maps to 216 to 377; sequence GMKVVIAGRP…LRDHLKQSMG (162 aa). Residue Asn226 coordinates K(+). GTP contacts are provided by residues 226–231, 245–251, 270–273, 335–338, and 358–360; these read NAGKSS, TDIAGTT, DTAG, NKAD, and SAR. Position 230 (Ser230) interacts with Mg(2+). K(+) is bound by residues Thr245, Ile247, and Thr250. Thr251 provides a ligand contact to Mg(2+). Lys454 provides a ligand contact to (6S)-5-formyl-5,6,7,8-tetrahydrofolate.

The protein belongs to the TRAFAC class TrmE-Era-EngA-EngB-Septin-like GTPase superfamily. TrmE GTPase family. In terms of assembly, homodimer. Heterotetramer of two MnmE and two MnmG subunits. It depends on K(+) as a cofactor.

The protein localises to the cytoplasm. Its function is as follows. Exhibits a very high intrinsic GTPase hydrolysis rate. Involved in the addition of a carboxymethylaminomethyl (cmnm) group at the wobble position (U34) of certain tRNAs, forming tRNA-cmnm(5)s(2)U34. The sequence is that of tRNA modification GTPase MnmE from Yersinia pseudotuberculosis serotype IB (strain PB1/+).